The chain runs to 191 residues: MRLHYLLRLLSFAFLWFILRSFLVKYLNFFTLGFFFCFSSTPRNFAYLVALFMLCLSTFSAFSNLTLFSWAKYSKLSLGSNVSNSTVVESSYISVIAPFFKIGFTLLSLLSLSPSSLSESNPCQDSSDSTCKSSVLSFFASSISASKFKLSLNVFNCSSITSLRSCRIFCLSSIFLSLSCSLINSCAFFCL.

4 helical membrane passes run 12-32 (FAFLWFILRSFLVKYLNFFTL), 48-68 (LVALFMLCLSTFSAFSNLTLF), 92-112 (YISVIAPFFKIGFTLLSLLSL), and 168-188 (IFCLSSIFLSLSCSLINSCAF).

The protein localises to the membrane. This is an uncharacterized protein from Saccharomyces cerevisiae (strain ATCC 204508 / S288c) (Baker's yeast).